Reading from the N-terminus, the 572-residue chain is Isocitrate dehydrogenase kinase/phosphatase (572 aa).

ATP-binding positions include Ala317–Met323 and Lys338. The active site involves Asp373.

This sequence belongs to the AceK family.

It is found in the cytoplasm. The catalysed reaction is L-seryl-[isocitrate dehydrogenase] + ATP = O-phospho-L-seryl-[isocitrate dehydrogenase] + ADP + H(+). Its function is as follows. Bifunctional enzyme which can phosphorylate or dephosphorylate isocitrate dehydrogenase (IDH) on a specific serine residue. This is a regulatory mechanism which enables bacteria to bypass the Krebs cycle via the glyoxylate shunt in response to the source of carbon. When bacteria are grown on glucose, IDH is fully active and unphosphorylated, but when grown on acetate or ethanol, the activity of IDH declines drastically concomitant with its phosphorylation. The polypeptide is Isocitrate dehydrogenase kinase/phosphatase (Ectopseudomonas mendocina (strain ymp) (Pseudomonas mendocina)).